The primary structure comprises 381 residues: Alkanesulfonate monooxygenase (381 aa).

Belongs to the SsuD family. As to quaternary structure, homotetramer.

It carries out the reaction an alkanesulfonate + FMNH2 + O2 = an aldehyde + FMN + sulfite + H2O + 2 H(+). Its function is as follows. Catalyzes the desulfonation of aliphatic sulfonates. This Enterobacter sp. (strain 638) protein is Alkanesulfonate monooxygenase.